The chain runs to 130 residues: Small ribosomal subunit protein uS9 (130 aa).

Belongs to the universal ribosomal protein uS9 family.

This Bacillus licheniformis (strain ATCC 14580 / DSM 13 / JCM 2505 / CCUG 7422 / NBRC 12200 / NCIMB 9375 / NCTC 10341 / NRRL NRS-1264 / Gibson 46) protein is Small ribosomal subunit protein uS9.